We begin with the raw amino-acid sequence, 145 residues long: Small ribosomal subunit protein uS9 (145 aa).

The protein belongs to the universal ribosomal protein uS9 family.

Its subcellular location is the cytoplasm. The polypeptide is Small ribosomal subunit protein uS9 (RPS16) (Gossypium hirsutum (Upland cotton)).